Reading from the N-terminus, the 90-residue chain is Probable Fe(2+)-trafficking protein (90 aa).

This sequence belongs to the Fe(2+)-trafficking protein family.

In terms of biological role, could be a mediator in iron transactions between iron acquisition and iron-requiring processes, such as synthesis and/or repair of Fe-S clusters in biosynthetic enzymes. In Chromobacterium violaceum (strain ATCC 12472 / DSM 30191 / JCM 1249 / CCUG 213 / NBRC 12614 / NCIMB 9131 / NCTC 9757 / MK), this protein is Probable Fe(2+)-trafficking protein.